A 442-amino-acid chain; its full sequence is Cell adhesion molecule 1 (442 aa).

An N-terminal signal peptide occupies residues 1–44 (MASVVLPSGSQCAAAAAAAAPPGLRLRLLLLLFSAAALIPTGDG). The region spanning 45 to 139 (QNLFTKDVTV…PPQESYTTIT (95 aa)) is the Ig-like V-type domain. Residues 45–374 (QNLFTKDVTV…EEGSIRAVDH (330 aa)) lie on the Extracellular side of the membrane. A disulfide bridge connects residues C64 and C124. Residues N67, N101, N113, and N165 are each glycosylated (N-linked (GlcNAc...) asparagine). Ig-like C2-type domains follow at residues 144–238 (PRNL…RYLE) and 243–329 (PQVH…YMLY). Intrachain disulfides connect C166–C220 and C267–C313. N-linked (GlcNAc...) asparagine glycans are attached at residues N304 and N308. A helical transmembrane segment spans residues 375–395 (AVIGGVVAVVVFAMLCLLIIL). The Cytoplasmic segment spans residues 396-442 (GRYFARHKGTYFTHEAKGADDAADADTAIINAEGGQNNSEEKKEYFI). T422 carries the post-translational modification Phosphothreonine. S434 bears the Phosphoserine mark.

It belongs to the nectin family. Homodimer (via Ig-like V-type domain). Interacts with FARP1. Interacts (via Ig-like V-type domain) with CRTAM (via Ig-like V-type domain); the interaction competes with CRTAM homodimerization and CADM1 homodimerization. Interacts (via C-terminus) with EPB41L3/DAL1. The interaction with EPB41L3/DAL1 may act to anchor CADM1 to the actin cytoskeleton. Interacts (via C-terminus) with MPP2 (via PDZ domain). Interacts (via C-terminus) with MPP3 (via PDZ domain); this interaction connects CADM1 with DLG1. Interacts (via C-terminus) with PALS2 (via PDZ domain). As to quaternary structure, (Microbial infection) Interacts with herpes virus 8 proteins vFLIP and vGPCR; these interactions are essential for NF-kappa-B activation. Glycosylation at Asn-67 and Asn-101 promotes adhesive binding and synapse induction.

Its subcellular location is the cell membrane. The protein localises to the synapse. In terms of biological role, mediates homophilic cell-cell adhesion in a Ca(2+)-independent manner. Also mediates heterophilic cell-cell adhesion with CADM3 and NECTIN3 in a Ca(2+)-independent manner. Interaction with CRTAM promotes natural killer (NK) cell cytotoxicity and interferon-gamma (IFN-gamma) secretion by CD8+ cells in vitro as well as NK cell-mediated rejection of tumors expressing CADM1 in vivo. In mast cells, may mediate attachment to and promote communication with nerves. CADM1, together with MITF, is essential for development and survival of mast cells in vivo. By interacting with CRTAM and thus promoting the adhesion between CD8+ T-cells and CD8+ dendritic cells, regulates the retention of activated CD8+ T-cell within the draining lymph node. Required for the intestinal retention of intraepithelial CD4+ CD8+ T-cells and, to a lesser extent, intraepithelial and lamina propria CD8+ T-cells and CD4+ T-cells. Interaction with CRTAM promotes the adhesion to gut-associated CD103+ dendritic cells, which may facilitate the expression of gut-homing and adhesion molecules on T-cells and the conversion of CD4+ T-cells into CD4+ CD8+ T-cells. Acts as a synaptic cell adhesion molecule and plays a role in the formation of dendritic spines and in synapse assembly. May be involved in neuronal migration, axon growth, pathfinding, and fasciculation on the axons of differentiating neurons. May play diverse roles in the spermatogenesis including in the adhesion of spermatocytes and spermatids to Sertoli cells and for their normal differentiation into mature spermatozoa. Acts as a tumor suppressor in non-small-cell lung cancer (NSCLC) cells. May contribute to the less invasive phenotypes of lepidic growth tumor cells. Functionally, (Microbial infection) Induces cell fusion in neuron infected by a neuropathogenic strain of measles. Interacts with measles hemagglutinin to trigger hyperfusogenic F-mediated membrane fusion and presumably transsynaptic cell-to-cell transmission of the virus. In Homo sapiens (Human), this protein is Cell adhesion molecule 1.